The sequence spans 127 residues: MKQKILGITIAFIILLLTTVAILFSVKVKQYLNVNLWTTQQQNFLMFKNEKDENLFNNVSWTNFQAETTEKSAKKAFRLYKKKISTSEISSELNKNLVKVDLSVTLEQGWYNITIMLPSKDLFEVIF.

Residues 5–25 (ILGITIAFIILLLTTVAILFS) traverse the membrane as a helical segment.

It is found in the membrane. This is an uncharacterized protein from Mycoplasma genitalium (strain ATCC 33530 / DSM 19775 / NCTC 10195 / G37) (Mycoplasmoides genitalium).